Here is a 397-residue protein sequence, read N- to C-terminus: 1-deoxy-D-xylulose 5-phosphate reductoisomerase (397 aa).

Positions 10, 11, 12, 13, 36, 37, 38, and 124 each coordinate NADPH. Lysine 125 provides a ligand contact to 1-deoxy-D-xylulose 5-phosphate. Glutamate 126 is a binding site for NADPH. A Mn(2+)-binding site is contributed by aspartate 150. Serine 151, glutamate 152, serine 186, and histidine 209 together coordinate 1-deoxy-D-xylulose 5-phosphate. Glutamate 152 serves as a coordination point for Mn(2+). Glycine 215 lines the NADPH pocket. Residues serine 222, asparagine 227, lysine 228, and glutamate 231 each coordinate 1-deoxy-D-xylulose 5-phosphate. Position 231 (glutamate 231) interacts with Mn(2+).

Belongs to the DXR family. Homodimer. It depends on Mg(2+) as a cofactor. Mn(2+) serves as cofactor.

It catalyses the reaction 2-C-methyl-D-erythritol 4-phosphate + NADP(+) = 1-deoxy-D-xylulose 5-phosphate + NADPH + H(+). The protein operates within isoprenoid biosynthesis; isopentenyl diphosphate biosynthesis via DXP pathway; isopentenyl diphosphate from 1-deoxy-D-xylulose 5-phosphate: step 1/6. Catalyzes the NADPH-dependent rearrangement and reduction of 1-deoxy-D-xylulose-5-phosphate (DXP) to 2-C-methyl-D-erythritol 4-phosphate (MEP). The polypeptide is 1-deoxy-D-xylulose 5-phosphate reductoisomerase (Proteus mirabilis (strain HI4320)).